The chain runs to 295 residues: Movement protein BC1 (295 aa).

The protein belongs to the begomovirus movement protein BC1 family. In terms of assembly, binds to dimeric supercoiled plasmid DNA. Post-translationally, phosphorylated.

It localises to the host cell membrane. Its subcellular location is the host microsome membrane. The protein localises to the host endoplasmic reticulum membrane. Its function is as follows. Transports viral genome to neighboring plant cells directly through plasmosdesmata, without any budding. The movement protein allows efficient cell to cell propagation, by bypassing the host cell wall barrier. Begomovirus genome is shuttled out of nucleus by Nuclear shuttle protein (NSP) and the movement protein transports the DNA-NSP complex to cell plasmodesmata and facilitates further movement across the cell wall. The protein is Movement protein BC1 of Brassica oleracea (Wild cabbage).